A 377-amino-acid chain; its full sequence is GDSL esterase/lipase 4 (377 aa).

Residues 1-21 form the signal peptide; it reads MASPRFNSIIIILFICTISLS. Ser44 serves as the catalytic Nucleophile. Residues Asn135, Asn188, Asn194, Asn207, and Asn241 are each glycosylated (N-linked (GlcNAc...) asparagine). Residues Asp342 and His345 contribute to the active site. A glycan (N-linked (GlcNAc...) asparagine) is linked at Asn364.

This sequence belongs to the 'GDSL' lipolytic enzyme family.

Its subcellular location is the secreted. This is GDSL esterase/lipase 4 (GLIP4) from Arabidopsis thaliana (Mouse-ear cress).